The following is a 282-amino-acid chain: MAGAGLIGIRRRIKSVTNIRKITKAMGLVSTAKLRKARVNLEINKKYYNEYKIILKDIINFIEDSNIYIDGNGSHKKLYVIFTSDSGLCGSFNINIINNVINEIKEDKENSLVIVIGQKGRMYLKKLGINTLAEYIEIPDVPTTKEARTIAKNIIKLYSSKEVGEVFLVYSEFYSPVKQQVLINKILPFTKENKSDNKYIEFNPPVTQLMDEILENYLKATILNCFSNSKASENGSRMTAMNGATDNANDLLDNLDLQFNRLRQSAITQEISEIVGGAEAQR.

Belongs to the ATPase gamma chain family. In terms of assembly, F-type ATPases have 2 components, CF(1) - the catalytic core - and CF(0) - the membrane proton channel. CF(1) has five subunits: alpha(3), beta(3), gamma(1), delta(1), epsilon(1). CF(0) has three main subunits: a, b and c.

Its subcellular location is the cell membrane. Functionally, produces ATP from ADP in the presence of a proton gradient across the membrane. The gamma chain is believed to be important in regulating ATPase activity and the flow of protons through the CF(0) complex. The sequence is that of ATP synthase gamma chain from Clostridium botulinum (strain Kyoto / Type A2).